A 249-amino-acid chain; its full sequence is ATP synthase subunit a, chloroplastic (249 aa).

5 consecutive transmembrane segments (helical) span residues 40-60, 97-117, 136-156, 201-221, and 222-242; these read QVLI…VLAI, VPFI…GALL, INTT…AGLS, LVVV…VMFL, and GLFT…AYIG.

This sequence belongs to the ATPase A chain family. As to quaternary structure, F-type ATPases have 2 components, CF(1) - the catalytic core - and CF(0) - the membrane proton channel. CF(1) has five subunits: alpha(3), beta(3), gamma(1), delta(1), epsilon(1). CF(0) has four main subunits: a, b, b' and c.

It is found in the plastid. The protein resides in the chloroplast thylakoid membrane. In terms of biological role, key component of the proton channel; it plays a direct role in the translocation of protons across the membrane. This is ATP synthase subunit a, chloroplastic from Lepidium virginicum (Virginia pepperweed).